Here is a 202-residue protein sequence, read N- to C-terminus: Orotate phosphoribosyltransferase (202 aa).

5-phospho-alpha-D-ribose 1-diphosphate is bound by residues Lys-93 and 113-121; that span reads EDIITTGGS. Orotate is bound by residues Thr-117 and Arg-145.

The protein belongs to the purine/pyrimidine phosphoribosyltransferase family. PyrE subfamily. In terms of assembly, homodimer. Mg(2+) serves as cofactor.

The catalysed reaction is orotidine 5'-phosphate + diphosphate = orotate + 5-phospho-alpha-D-ribose 1-diphosphate. The protein operates within pyrimidine metabolism; UMP biosynthesis via de novo pathway; UMP from orotate: step 1/2. Its function is as follows. Catalyzes the transfer of a ribosyl phosphate group from 5-phosphoribose 1-diphosphate to orotate, leading to the formation of orotidine monophosphate (OMP). This chain is Orotate phosphoribosyltransferase, found in Campylobacter jejuni subsp. jejuni serotype O:23/36 (strain 81-176).